The following is a 479-amino-acid chain: Glutamyl-tRNA(Gln) amidotransferase subunit A (479 aa).

Catalysis depends on charge relay system residues Lys71 and Ser146. Catalysis depends on Ser170, which acts as the Acyl-ester intermediate.

The protein belongs to the amidase family. GatA subfamily. As to quaternary structure, heterotrimer of A, B and C subunits.

It carries out the reaction L-glutamyl-tRNA(Gln) + L-glutamine + ATP + H2O = L-glutaminyl-tRNA(Gln) + L-glutamate + ADP + phosphate + H(+). Its function is as follows. Allows the formation of correctly charged Gln-tRNA(Gln) through the transamidation of misacylated Glu-tRNA(Gln) in organisms which lack glutaminyl-tRNA synthetase. The reaction takes place in the presence of glutamine and ATP through an activated gamma-phospho-Glu-tRNA(Gln). The chain is Glutamyl-tRNA(Gln) amidotransferase subunit A from Lactobacillus acidophilus (strain ATCC 700396 / NCK56 / N2 / NCFM).